A 293-amino-acid polypeptide reads, in one-letter code: MNEQELKQMIEGILTEMSGGKTTDTVAAAPTKSVVETVVTEGSIPDITEVDIKKQLLVPEPADREGYLKMKQMTPARLGLWRAGPRYKTETILRFRADHAVAQDSVFSYVSEDLVKEMNFIPVNTKCHDKDEYLTRPDLGREFDDEMVEVIRANTTKNAKLQIVVGDGLSSAAIEANIKDILPSIKQGLKMYNLDFDNIIFVKHCRVPSMDQIGEITGADVVCLLVGERPGLVTAESMSAYIAYKPTVGMPEARRTVISNIHSGGTPPVEAGAYIAELIHNMLEKKCSGIDLK.

V207 and E228 together coordinate adenosylcob(III)alamin.

It belongs to the EutC family. As to quaternary structure, the basic unit is a heterodimer which dimerizes to form tetramers. The heterotetramers trimerize; 6 large subunits form a core ring with 6 small subunits projecting outwards. Adenosylcob(III)alamin serves as cofactor.

It is found in the bacterial microcompartment. The enzyme catalyses ethanolamine = acetaldehyde + NH4(+). It functions in the pathway amine and polyamine degradation; ethanolamine degradation. Catalyzes the deamination of various vicinal amino-alcohols to oxo compounds. Allows this organism to utilize ethanolamine as the sole source of nitrogen and carbon in the presence of external vitamin B12. This Listeria innocua serovar 6a (strain ATCC BAA-680 / CLIP 11262) protein is Ethanolamine ammonia-lyase small subunit.